We begin with the raw amino-acid sequence, 346 residues long: Flap endonuclease 1 (346 aa).

Positions 1 to 102 are N-domain; it reads MGVTELGKLI…AEIEERRKAK (102 aa). Residues Asp-31, Asp-84, Glu-156, Glu-158, Asp-177, Asp-179, and Asp-239 each contribute to the Mg(2+) site. An I-domain region spans residues 120–261; it reads EVAKYAKRAI…RALKLIWEFG (142 aa).

This sequence belongs to the XPG/RAD2 endonuclease family. FEN1 subfamily. In terms of assembly, interacts with PCNA. PCNA stimulates the nuclease activity without altering cleavage specificity. The cofactor is Mg(2+).

Functionally, structure-specific nuclease with 5'-flap endonuclease and 5'-3' exonuclease activities involved in DNA replication and repair. During DNA replication, cleaves the 5'-overhanging flap structure that is generated by displacement synthesis when DNA polymerase encounters the 5'-end of a downstream Okazaki fragment. Binds the unpaired 3'-DNA end and kinks the DNA to facilitate 5' cleavage specificity. Cleaves one nucleotide into the double-stranded DNA from the junction in flap DNA, leaving a nick for ligation. Also involved in the base excision repair (BER) pathway. Acts as a genome stabilization factor that prevents flaps from equilibrating into structures that lead to duplications and deletions. Also possesses 5'-3' exonuclease activity on nicked or gapped double-stranded DNA. The chain is Flap endonuclease 1 from Pyrobaculum arsenaticum (strain DSM 13514 / JCM 11321 / PZ6).